A 285-amino-acid chain; its full sequence is Probable endonuclease 4 (285 aa).

Zn(2+) is bound by residues H67, H107, E144, D177, H180, H214, D227, H229, and E259.

The protein belongs to the AP endonuclease 2 family. Requires Zn(2+) as cofactor.

The catalysed reaction is Endonucleolytic cleavage to 5'-phosphooligonucleotide end-products.. Functionally, endonuclease IV plays a role in DNA repair. It cleaves phosphodiester bonds at apurinic or apyrimidinic (AP) sites, generating a 3'-hydroxyl group and a 5'-terminal sugar phosphate. The sequence is that of Probable endonuclease 4 from Persephonella marina (strain DSM 14350 / EX-H1).